Consider the following 716-residue polypeptide: Protein Hook homolog 2 (716 aa).

The tract at residues 1–161 is required for localization to the centrosome and induction of aggresome formation; sequence MSVDKAELCG…ELMTKDTPDS (161 aa). The segment at 1 to 546 is sufficient for interaction with microtubules; the sequence is MSVDKAELCG…LKRKLEDHLQ (546 aa). Residues 6 to 122 form the Calponin-homology (CH) domain; the sequence is AELCGSLLTW…KLLQLVLGCA (117 aa). Serine 163 bears the Phosphoserine mark. 2 coiled-coil regions span residues 188-427 and 455-605; these read DHLQ…AQLQ and AELR…VDKA. The interval 533–716 is required for localization to the centrosome and induction of aggresome formation; the sequence is DPTLLKRKLE…ALSLRPTDKH (184 aa). The interval 582 to 716 is sufficient for interaction with CNTRL; it reads DSLQKKDADL…ALSLRPTDKH (135 aa).

The protein belongs to the hook family. In terms of assembly, self-associates. Component of the FTS/Hook/FHIP complex (FHF complex), composed of AKTIP/FTS, FHIP1B, and one or more members of the Hook family of proteins HOOK1, HOOK2, and HOOK3. May interact directly with AKTIP/FTS, HOOK1 and HOOK3. Associates with several subunits of the homotypic vesicular sorting complex (the HOPS complex) including VPS16 and VPS41; these interactions may be indirect. Interacts with CNTRL. Interacts with microtubules. Interacts with ZC3H14. Interacts with LRGUK (via guanylate kinase-like domain). Interacts with CCDC181. Interacts with AP4M1; the interaction is direct, mediates the interaction between FTS-Hook-FHIP (FHF) complex and AP-4 and the perinuclear distribution of AP-4. Expressed in brain, cerebellum, kidney, liver and heart, with highest levels in heart and kidney (at protein level).

The protein resides in the cytoplasm. It is found in the cytoskeleton. Its subcellular location is the microtubule organizing center. The protein localises to the centrosome. It localises to the golgi apparatus. The protein resides in the trans-Golgi network. In terms of biological role, component of the FTS/Hook/FHIP complex (FHF complex). The FHF complex may function to promote vesicle trafficking and/or fusion via the homotypic vesicular protein sorting complex (the HOPS complex). Contributes to the establishment and maintenance of centrosome function. May function in the positioning or formation of aggresomes, which are pericentriolar accumulations of misfolded proteins, proteasomes and chaperones. FHF complex promotes the distribution of AP-4 complex to the perinuclear area of the cell. The sequence is that of Protein Hook homolog 2 (Hook2) from Mus musculus (Mouse).